The following is a 341-amino-acid chain: HTH-type transcriptional repressor PurR (341 aa).

The region spanning 2 to 56 is the HTH lacI-type domain; that stretch reads ATIKDVAKRANVSTTTVSHVINKTRFVAEETRNAVWTAIKELHYSPSAVARSLKV. Residues 4–23 constitute a DNA-binding region (H-T-H motif); it reads IKDVAKRANVSTTTVSHVIN. A DNA-binding region spans residues 48-56; that stretch reads SAVARSLKV. Y73, R190, T192, F221, and D275 together coordinate hypoxanthine.

Homodimer.

Its pathway is purine metabolism; purine nucleotide biosynthesis [regulation]. Functionally, is the main repressor of the genes involved in the de novo synthesis of purine nucleotides, regulating purB, purC, purEK, purF, purHD, purL, purMN and guaBA expression. PurR is allosterically activated to bind its cognate DNA by binding the purine corepressors, hypoxanthine or guanine, thereby effecting transcription repression. This chain is HTH-type transcriptional repressor PurR, found in Salmonella paratyphi A (strain ATCC 9150 / SARB42).